Reading from the N-terminus, the 276-residue chain is MMPMDWEITFKGITYECINCAYCCSCKGWRIYLNYFDRLKLKDYEYAIEPCEGEFKYRLKVNEKGCVLLNNNLCRIHLEKGYEFKPLMCMIFPFSCMIKWDGTPLLIIKHYCSGIKKGKISKKVVNEAIELIKELYFDMFEEIIENGMEHSSKTEIFENFRVDWEEREDFGRYIFSSKTFDEMFERCREIFGNKINKLNLEEIDEIKNNLQRYNTKENEEEILRYLLELNRREHFRKLPFYREVNKLINIGNYLTKYKNVFKGEGEVDKKLFLNLK.

This is an uncharacterized protein from Methanocaldococcus jannaschii (strain ATCC 43067 / DSM 2661 / JAL-1 / JCM 10045 / NBRC 100440) (Methanococcus jannaschii).